Reading from the N-terminus, the 1358-residue chain is Tenascin-R (1358 aa).

Residues 1 to 31 (MGIDGETVVLKNMLIGVNLILLGSMLKPSEC) form the signal peptide. Positions 37-58 (TERAQRQTVEEEGGASSYNTSS) are disordered. Asn55 carries N-linked (GlcNAc...) asparagine glycosylation. Positions 127–157 (CASSSQVLQELLSRIEMLEREVSLLRDQCNT) form a coiled coil. Ser176 is a glycosylation site (O-linked (Xyl...) (chondroitin sulfate) serine). Residues Asn180 and Asn198 are each glycosylated (N-linked (GlcNAc...) asparagine). EGF-like domains are found at residues 188–199 (CICNEGWFGKNC), 219–230 (CICDSEYSGDDC), and 250–261 (CVCEEPYTGEDC). O-linked (Xyl...) (chondroitin sulfate) serine glycosylation is present at Ser271. Asn278 carries N-linked (GlcNAc...) asparagine glycosylation. The EGF-like 4 domain maps to 281–292 (CLCQEGYAGEDC). Cystine bridges form between Cys297–Cys307 and Cys314–Cys323. The O-linked (Xyl...) (chondroitin sulfate) serine glycan is linked to Ser302. The region spanning 312-323 (CICEEGYQGPDC) is the EGF-like 5 domain. Fibronectin type-III domains are found at residues 328 to 420 (PPED…TPQG), 421 to 505 (LQFK…TVID), 506 to 597 (GPTQ…IDAP), 598 to 687 (KNLR…TELD), 688 to 777 (SPRD…FRPI), 778 to 865 (SHLH…TGID), 866 to 955 (PPKN…AMDS), 956 to 1042 (PMDL…TLLD), and 1043 to 1131 (PPDN…GGRV). Residues Asn392, Asn470, and Asn581 are each glycosylated (N-linked (GlcNAc...) asparagine). The residue at position 724 (Ser724) is a Phosphoserine. N-linked (GlcNAc...) asparagine glycosylation is found at Asn791, Asn869, Asn874, Asn1036, Asn1046, and Asn1261. In terms of domain architecture, Fibrinogen C-terminal spans 1129–1344 (GRVFSHPQDC…FVEMKMRPYI (216 aa)).

This sequence belongs to the tenascin family. As to quaternary structure, interacts with BCAN and ACAN in a calcium-dependent manner. Interacts with SCN2B, PTPRZ1, and CSPG3. Forms oligomers. Isoforms 1 and 2 form respectively trimeric (tribrachion) and dimeric kink-armed rodlike structures, which are linked by disulfide bridges. Interacts with CNTN1, TNC and FN1. Contains N-linked oligosaccharides with a sulfated carbohydrate structures. Contains N-linked oligosaccharides, O-linked sialylated structures and O-linked chondroitin sulfate glycosaminoglycans. Brain-specific.

The protein localises to the secreted. Its subcellular location is the extracellular space. It localises to the extracellular matrix. Its function is as follows. Neural extracellular matrix (ECM) protein involved in interactions with different cells and matrix components. Theses interactions can influence cellular behavior by either evoking a stable adhesion and differentiation, or repulsion and inhibition of neurite growth. Binding to cell surface gangliosides inhibits RGD-dependent integrin-mediated cell adhesion and results in an inhibition of PTK2/FAK1 (FAK) phosphorylation and cell detachment. Binding to membrane surface sulfatides results in a oligodendrocyte adhesion and differentiation. Interaction with CNTN1 induces a repulsion of neurons and an inhibition of neurite outgrowth. Interacts with SCN2B may play a crucial role in clustering and regulation of activity of sodium channels at nodes of Ranvier. TNR-linked chondroitin sulfate glycosaminoglycans are involved in the interaction with FN1 and mediates inhibition of cell adhesion and neurite outgrowth. The highly regulated addition of sulfated carbohydrate structure may modulate the adhesive properties of TNR over the course of development and during synapse maintenance. The protein is Tenascin-R (Tnr) of Mus musculus (Mouse).